Reading from the N-terminus, the 417-residue chain is Queuine tRNA-ribosyltransferase accessory subunit 2 (417 aa).

Positions 324, 326, 329, and 355 each coordinate Zn(2+).

Belongs to the queuine tRNA-ribosyltransferase family. QTRT2 subfamily. In terms of assembly, heterodimer of a catalytic subunit and an accessory subunit. Zn(2+) is required as a cofactor.

It is found in the cytoplasm. In terms of biological role, non-catalytic subunit of the queuine tRNA-ribosyltransferase (TGT) that catalyzes the base-exchange of a guanine (G) residue with queuine (Q) at position 34 (anticodon wobble position) in tRNAs with GU(N) anticodons (tRNA-Asp, -Asn, -His and -Tyr), resulting in the hypermodified nucleoside queuosine (7-(((4,5-cis-dihydroxy-2-cyclopenten-1-yl)amino)methyl)-7-deazaguanosine). This Drosophila persimilis (Fruit fly) protein is Queuine tRNA-ribosyltransferase accessory subunit 2.